The sequence spans 475 residues: 3-isopropylmalate dehydratase large subunit (475 aa).

Positions 353, 414, and 417 each coordinate [4Fe-4S] cluster.

Belongs to the aconitase/IPM isomerase family. LeuC type 1 subfamily. As to quaternary structure, heterodimer of LeuC and LeuD. [4Fe-4S] cluster serves as cofactor.

It carries out the reaction (2R,3S)-3-isopropylmalate = (2S)-2-isopropylmalate. The protein operates within amino-acid biosynthesis; L-leucine biosynthesis; L-leucine from 3-methyl-2-oxobutanoate: step 2/4. Functionally, catalyzes the isomerization between 2-isopropylmalate and 3-isopropylmalate, via the formation of 2-isopropylmaleate. The polypeptide is 3-isopropylmalate dehydratase large subunit (Ectopseudomonas mendocina (strain ymp) (Pseudomonas mendocina)).